Here is a 317-residue protein sequence, read N- to C-terminus: Apolipoprotein E (317 aa).

An N-terminal signal peptide occupies residues 1 to 18 (MKVLWAALLVTFLAGCQA). A run of 8 repeats spans residues 80-101 (ALMD…EQLT), 102-123 (PVAE…ARLG), 124-145 (ADME…AMLG), 146-167 (QSTE…KRLL), 168-189 (RDAD…EGAE), 190-211 (RGVS…VRAA), 212-233 (TVGS…ERLR), and 234-255 (ARME…EQVA). An 8 X 22 AA approximate tandem repeats region spans residues 80 to 255 (ALMDETMKEL…RLDEVKEQVA (176 aa)). At Met-143 the chain carries Methionine sulfoxide. Ser-147 carries the post-translational modification Phosphoserine. The interval 158–168 (HLRKLRKRLLR) is LDL and other lipoprotein receptors binding. 162 to 165 (LRKR) provides a ligand contact to heparin. Residues 210 to 290 (AATVGSLAGQ…SWFEPLVEDM (81 aa)) are lipid-binding and lipoprotein association. A heparin-binding site is contributed by 229-236 (GERLRARM). Positions 266 to 317 (QQIRLQAEAFQARLKSWFEPLVEDMQRQWAGLVEKVQAAVGTSAAPVPSDNH) are homooligomerization. The segment at 278–290 (RLKSWFEPLVEDM) is specificity for association with VLDL.

It belongs to the apolipoprotein A1/A4/E family. Homotetramer. May interact with ABCA1; functionally associated with ABCA1 in the biogenesis of HDLs. May interact with APP/A4 amyloid-beta peptide; the interaction is extremely stable in vitro but its physiological significance is unclear. May interact with MAPT. May interact with MAP2. In the cerebrospinal fluid, interacts with secreted SORL1. Interacts with PMEL; this allows the loading of PMEL luminal fragment on ILVs to induce fibril nucleation. In terms of processing, APOE exists as multiple glycosylated and sialylated glycoforms within cells and in plasma. The extent of glycosylation and sialylation are tissue and context specific. Post-translationally, glycated in plasma VLDL. Phosphorylated by FAM20C in the extracellular medium.

It is found in the secreted. Its subcellular location is the extracellular space. The protein resides in the extracellular matrix. It localises to the extracellular vesicle. The protein localises to the endosome. It is found in the multivesicular body. APOE is an apolipoprotein, a protein associating with lipid particles, that mainly functions in lipoprotein-mediated lipid transport between organs via the plasma and interstitial fluids. APOE is a core component of plasma lipoproteins and is involved in their production, conversion and clearance. Apolipoproteins are amphipathic molecules that interact both with lipids of the lipoprotein particle core and the aqueous environment of the plasma. As such, APOE associates with chylomicrons, chylomicron remnants, very low density lipoproteins (VLDL) and intermediate density lipoproteins (IDL) but shows a preferential binding to high-density lipoproteins (HDL). It also binds a wide range of cellular receptors including the LDL receptor/LDLR, the LDL receptor-related proteins LRP1, LRP2 and LRP8 and the very low-density lipoprotein receptor/VLDLR that mediate the cellular uptake of the APOE-containing lipoprotein particles. Finally, APOE also has a heparin-binding activity and binds heparan-sulfate proteoglycans on the surface of cells, a property that supports the capture and the receptor-mediated uptake of APOE-containing lipoproteins by cells. A main function of APOE is to mediate lipoprotein clearance through the uptake of chylomicrons, VLDLs, and HDLs by hepatocytes. APOE is also involved in the biosynthesis by the liver of VLDLs as well as their uptake by peripheral tissues ensuring the delivery of triglycerides and energy storage in muscle, heart and adipose tissues. By participating in the lipoprotein-mediated distribution of lipids among tissues, APOE plays a critical role in plasma and tissues lipid homeostasis. APOE is also involved in two steps of reverse cholesterol transport, the HDLs-mediated transport of cholesterol from peripheral tissues to the liver, and thereby plays an important role in cholesterol homeostasis. First, it is functionally associated with ABCA1 in the biogenesis of HDLs in tissues. Second, it is enriched in circulating HDLs and mediates their uptake by hepatocytes. APOE also plays an important role in lipid transport in the central nervous system, regulating neuron survival and sprouting. This Hylobates lar (Lar gibbon) protein is Apolipoprotein E (APOE).